Here is a 187-residue protein sequence, read N- to C-terminus: GTP cyclohydrolase 1 (187 aa).

Zn(2+) contacts are provided by Cys-76, His-79, and Cys-148.

This sequence belongs to the GTP cyclohydrolase I family. Toroid-shaped homodecamer, composed of two pentamers of five dimers.

It carries out the reaction GTP + H2O = 7,8-dihydroneopterin 3'-triphosphate + formate + H(+). It participates in cofactor biosynthesis; 7,8-dihydroneopterin triphosphate biosynthesis; 7,8-dihydroneopterin triphosphate from GTP: step 1/1. The polypeptide is GTP cyclohydrolase 1 (Streptococcus thermophilus (strain CNRZ 1066)).